The chain runs to 498 residues: ATP synthase subunit beta, chloroplastic (498 aa).

An ATP-binding site is contributed by 172 to 179 (GGAGVGKT).

The protein belongs to the ATPase alpha/beta chains family. F-type ATPases have 2 components, CF(1) - the catalytic core - and CF(0) - the membrane proton channel. CF(1) has five subunits: alpha(3), beta(3), gamma(1), delta(1), epsilon(1). CF(0) has four main subunits: a(1), b(1), b'(1) and c(9-12).

The protein localises to the plastid. It localises to the chloroplast thylakoid membrane. The catalysed reaction is ATP + H2O + 4 H(+)(in) = ADP + phosphate + 5 H(+)(out). Produces ATP from ADP in the presence of a proton gradient across the membrane. The catalytic sites are hosted primarily by the beta subunits. The protein is ATP synthase subunit beta, chloroplastic of Montinia caryophyllacea (Wild clove bush).